A 213-amino-acid chain; its full sequence is Imidazole glycerol phosphate synthase subunit HisH (213 aa).

Residues Thr-8–Pro-213 form the Glutamine amidotransferase type-1 domain. Catalysis depends on Cys-91, which acts as the Nucleophile. Active-site residues include His-193 and Glu-195.

In terms of assembly, heterodimer of HisH and HisF.

It localises to the cytoplasm. It catalyses the reaction 5-[(5-phospho-1-deoxy-D-ribulos-1-ylimino)methylamino]-1-(5-phospho-beta-D-ribosyl)imidazole-4-carboxamide + L-glutamine = D-erythro-1-(imidazol-4-yl)glycerol 3-phosphate + 5-amino-1-(5-phospho-beta-D-ribosyl)imidazole-4-carboxamide + L-glutamate + H(+). It carries out the reaction L-glutamine + H2O = L-glutamate + NH4(+). It functions in the pathway amino-acid biosynthesis; L-histidine biosynthesis; L-histidine from 5-phospho-alpha-D-ribose 1-diphosphate: step 5/9. In terms of biological role, IGPS catalyzes the conversion of PRFAR and glutamine to IGP, AICAR and glutamate. The HisH subunit catalyzes the hydrolysis of glutamine to glutamate and ammonia as part of the synthesis of IGP and AICAR. The resulting ammonia molecule is channeled to the active site of HisF. This is Imidazole glycerol phosphate synthase subunit HisH from Zymomonas mobilis subsp. mobilis (strain ATCC 31821 / ZM4 / CP4).